A 225-amino-acid chain; its full sequence is Large ribosomal subunit protein uL1 (225 aa).

It belongs to the universal ribosomal protein uL1 family. In terms of assembly, part of the 50S ribosomal subunit.

In terms of biological role, binds directly to 23S rRNA. The L1 stalk is quite mobile in the ribosome, and is involved in E site tRNA release. Functionally, protein L1 is also a translational repressor protein, it controls the translation of the L11 operon by binding to its mRNA. In Rhodopirellula baltica (strain DSM 10527 / NCIMB 13988 / SH1), this protein is Large ribosomal subunit protein uL1.